We begin with the raw amino-acid sequence, 159 residues long: MNLRRKNRLWVVCAVLAGLGLTTALVLYALRANIDLFYTPGEILYGKRETQQLPAAGQRLRVGGMVMPGSVRRDPDSLKVNFSLYDAEGSVTVSYEGILPDLFREGQGVVVQGTLEKGNHVLAHEVLAKHDENYTPPEVEKAMQENHRRPQRADKDTSS.

Residues 1–8 (MNLRRKNR) lie on the Cytoplasmic side of the membrane. A helical; Signal-anchor for type II membrane protein transmembrane segment spans residues 9–29 (LWVVCAVLAGLGLTTALVLYA). At 30–159 (LRANIDLFYT…PQRADKDTSS (130 aa)) the chain is on the periplasmic side. Residues 129-159 (KHDENYTPPEVEKAMQENHRRPQRADKDTSS) form a disordered region. Residues H130 and Y134 each coordinate heme.

The protein belongs to the CcmE/CycJ family.

It is found in the cell inner membrane. Functionally, heme chaperone required for the biogenesis of c-type cytochromes. Transiently binds heme delivered by CcmC and transfers the heme to apo-cytochromes in a process facilitated by CcmF and CcmH. The sequence is that of Cytochrome c-type biogenesis protein CcmE from Salmonella typhimurium (strain LT2 / SGSC1412 / ATCC 700720).